A 449-amino-acid polypeptide reads, in one-letter code: Probable secreted beta-glucosidase ARB_04747 (449 aa).

Residues 1-21 (MKFSSGILSLAVAASVQSVQA) form the signal peptide. Asn57 is a glycosylation site (N-linked (GlcNAc...) asparagine). Residues 96-185 (SPPACPAPSY…RPFPDGEIDC (90 aa)) form a disordered region. Pro residues predominate over residues 98-125 (PACPAPSYVPSPPAAPSSPPAAPQPPSK). Positions 131–150 (EEPKKPEEPKKPEGPKKPEG) are enriched in basic and acidic residues.

This sequence belongs to the SUN family.

The protein localises to the secreted. Its subcellular location is the cell wall. In terms of biological role, cell surface beta-glucosidase involved in cytokinesis, cell wall biogenesis, adhesion to host tissue; thus playing an important role in the host-pathogen interaction. Has hydrolytic activity on linear (1-&gt;3)-beta-D-glucans such as laminaribiose and other laminarioligosaccharides. The polypeptide is Probable secreted beta-glucosidase ARB_04747 (Arthroderma benhamiae (strain ATCC MYA-4681 / CBS 112371) (Trichophyton mentagrophytes)).